Consider the following 349-residue polypeptide: Magnesium-protoporphyrin IX monomethyl ester [oxidative] cyclase (349 aa).

Residues Met1–His22 form a disordered region.

The protein belongs to the AcsF family. Fe cation serves as cofactor.

It catalyses the reaction Mg-protoporphyrin IX 13-monomethyl ester + 3 NADPH + 3 O2 + 2 H(+) = 3,8-divinyl protochlorophyllide a + 3 NADP(+) + 5 H2O. It functions in the pathway porphyrin-containing compound metabolism; chlorophyll biosynthesis (light-independent). Catalyzes the formation of the isocyclic ring in chlorophyll biosynthesis. Mediates the cyclase reaction, which results in the formation of divinylprotochlorophyllide (Pchlide) characteristic of all chlorophylls from magnesium-protoporphyrin IX 13-monomethyl ester (MgPMME). The protein is Magnesium-protoporphyrin IX monomethyl ester [oxidative] cyclase of Prochlorococcus marinus (strain MIT 9211).